The sequence spans 268 residues: Protein APE_1980.1 (268 aa).

This sequence belongs to the CinA family.

The chain is Protein APE_1980.1 from Aeropyrum pernix (strain ATCC 700893 / DSM 11879 / JCM 9820 / NBRC 100138 / K1).